Here is a 198-residue protein sequence, read N- to C-terminus: FMN-dependent NADH:quinone oxidoreductase (198 aa).

FMN contacts are provided by residues Ser10, 16–18 (SQS), 94–97 (MYNF), and 138–141 (TRGG).

The protein belongs to the azoreductase type 1 family. Homodimer. The cofactor is FMN.

It catalyses the reaction 2 a quinone + NADH + H(+) = 2 a 1,4-benzosemiquinone + NAD(+). The catalysed reaction is N,N-dimethyl-1,4-phenylenediamine + anthranilate + 2 NAD(+) = 2-(4-dimethylaminophenyl)diazenylbenzoate + 2 NADH + 2 H(+). In terms of biological role, quinone reductase that provides resistance to thiol-specific stress caused by electrophilic quinones. Its function is as follows. Also exhibits azoreductase activity. Catalyzes the reductive cleavage of the azo bond in aromatic azo compounds to the corresponding amines. The protein is FMN-dependent NADH:quinone oxidoreductase of Shewanella oneidensis (strain ATCC 700550 / JCM 31522 / CIP 106686 / LMG 19005 / NCIMB 14063 / MR-1).